The primary structure comprises 503 residues: Protein ERGIC-53-like (503 aa).

A signal peptide spans Met1–Arg25. The Lumenal segment spans residues Ser26–Arg439. The L-type lectin-like domain occupies Arg32–Leu253. A disulfide bridge connects residues Cys177 and Cys216. A helical transmembrane segment spans residues Thr440 to Phe460. The Cytoplasmic segment spans residues Arg461–Ala503.

In terms of tissue distribution, predominantly expressed in the sublingual salivary gland, in the mucous cells of the acini, but not in the serous cells, nor in the duct system (at protein level). Not detected in the submandilar, nor the parotid glands. Expressed in the mucous glands, but not detected in the serous glands (at protein level). Besides the salivary glands, expressed in the Brunner's glands in the duodenum, but no other mucous or serous glands (at protein level).

Its subcellular location is the endoplasmic reticulum-Golgi intermediate compartment membrane. The sequence is that of Protein ERGIC-53-like (Lman1l) from Rattus norvegicus (Rat).